The chain runs to 302 residues: MNVSVVTERRTPAYSSLAAGELNGLVARALLTEARLTPKPGLVDIRNSGAHRDMDLAAFERSTTAIAPWMEKFFIMGNNTAALAAENVLVMLRPLGMACENDMLQATNGVNTHRRAIFAFGLLSAAIGRLLARGEPLEQNRICDQVARLSRNIVAHELSAKKAGKLTKSETHFQCYGLSGARGEAESGFRTVRTQALPVFNRVVQEHDDTHLALLQTLLHLMAWNDDTNLVSRGGLEGLYYVQQQAQKLLWQGGVLVEGGIEAMQSLDDELILRNLSPGGSADLLAVTWFLSHFPAGSLYPE.

This sequence belongs to the CitG/MdcB family.

It catalyses the reaction 3'-dephospho-CoA + ATP = 2'-(5''-triphospho-alpha-D-ribosyl)-3'-dephospho-CoA + adenine. The chain is Probable 2-(5''-triphosphoribosyl)-3'-dephosphocoenzyme-A synthase 1 from Salmonella paratyphi A (strain ATCC 9150 / SARB42).